A 903-amino-acid chain; its full sequence is Dual serine/threonine and tyrosine protein kinase (903 aa).

The stretch at 382–414 (ANRKQEEMKEMIVETLESMKEQLLEDAANLEFT) forms a coiled coil. The Protein kinase domain occupies 627–881 (PKLGRELGRG…PLLGIVQPSL (255 aa)). Residues 633-641 (LGRGQYGVV) and K656 each bind ATP. D752 (proton acceptor) is an active-site residue.

It belongs to the protein kinase superfamily. Ser/Thr protein kinase family.

It is found in the cytoplasm. The protein resides in the cell membrane. It localises to the apical cell membrane. Its subcellular location is the basolateral cell membrane. The protein localises to the cell junction. The enzyme catalyses L-seryl-[protein] + ATP = O-phospho-L-seryl-[protein] + ADP + H(+). It catalyses the reaction L-threonyl-[protein] + ATP = O-phospho-L-threonyl-[protein] + ADP + H(+). The catalysed reaction is L-tyrosyl-[protein] + ATP = O-phospho-L-tyrosyl-[protein] + ADP + H(+). Its function is as follows. May act as a positive regulator of ERK phosphorylation downstream of fibroblast growth factor-receptor activation. May induce both caspase-dependent apoptosis and caspase-independent cell death. May play a role in the embryonic development. In Pimephales promelas (Fathead minnow), this protein is Dual serine/threonine and tyrosine protein kinase.